Reading from the N-terminus, the 486-residue chain is Malonate-semialdehyde dehydrogenase (486 aa).

Phe154, Lys178, Glu181, Arg182, and Ser231 together coordinate NAD(+). Cys286 acts as the Nucleophile in catalysis. Glu386 contacts NAD(+).

This sequence belongs to the aldehyde dehydrogenase family. IolA subfamily. As to quaternary structure, homotetramer.

It carries out the reaction 3-oxopropanoate + NAD(+) + CoA + H2O = hydrogencarbonate + acetyl-CoA + NADH + H(+). The catalysed reaction is 2-methyl-3-oxopropanoate + NAD(+) + CoA + H2O = propanoyl-CoA + hydrogencarbonate + NADH + H(+). It functions in the pathway polyol metabolism; myo-inositol degradation into acetyl-CoA; acetyl-CoA from myo-inositol: step 7/7. Functionally, catalyzes the oxidation of malonate semialdehyde (MSA) and methylmalonate semialdehyde (MMSA) into acetyl-CoA and propanoyl-CoA, respectively. Is involved in a myo-inositol catabolic pathway. Bicarbonate, and not CO2, is the end-product of the enzymatic reaction. The protein is Malonate-semialdehyde dehydrogenase of Bacillus cereus (strain ATCC 10987 / NRS 248).